The sequence spans 208 residues: Nascent polypeptide-associated complex subunit alpha (208 aa).

Over residues 1-19 (MSSSRIEELPDDDVPKTTV) the composition is skewed to basic and acidic residues. Disordered regions lie at residues 1–50 (MSSS…HSRN) and 120–166 (QLAA…VFDA). The segment covering 21-34 (DAADSSESEVEGAE) has biased composition (acidic residues). Positions 48–113 (SRNEKKARKA…AKIEDLNSQA (66 aa)) constitute an NAC-A/B domain. Residues 120–131 (QLAAAEAAGSNE) show a composition bias toward low complexity. Residues 132 to 154 (HAGHDHASHDHGKGKAVESADKK) show a composition bias toward basic and acidic residues. Over residues 155-164 (DEEEDDEEVF) the composition is skewed to acidic residues. The region spanning 169–208 (LEAKDIELVMAQASVSRNKAIKALKENDNDIVNSIMALSV) is the UBA domain.

It belongs to the NAC-alpha family. In terms of assembly, part of the nascent polypeptide-associated complex (NAC), consisting of EGD2 and EGD1. NAC associates with ribosomes via EGD1.

It localises to the cytoplasm. The protein resides in the nucleus. Functionally, component of the nascent polypeptide-associated complex (NAC), a dynamic component of the ribosomal exit tunnel, protecting the emerging polypeptides from interaction with other cytoplasmic proteins to ensure appropriate nascent protein targeting. The NAC complex also promotes mitochondrial protein import by enhancing productive ribosome interactions with the outer mitochondrial membrane and blocks the inappropriate interaction of ribosomes translating non-secretory nascent polypeptides with translocation sites in the membrane of the endoplasmic reticulum. EGD2 may also be involved in transcription regulation. This is Nascent polypeptide-associated complex subunit alpha (EGD2) from Ajellomyces capsulatus (strain NAm1 / WU24) (Darling's disease fungus).